The primary structure comprises 138 residues: Small ribosomal subunit protein uS11B (138 aa).

A disordered region spans residues D118 to L138. Residues K129–L138 show a composition bias toward basic residues.

The protein belongs to the universal ribosomal protein uS11 family. In terms of assembly, component of the small ribosomal subunit (SSU). Mature yeast ribosomes consist of a small (40S) and a large (60S) subunit. The 40S small subunit contains 1 molecule of ribosomal RNA (18S rRNA) and 33 different proteins (encoded by 57 genes). The large 60S subunit contains 3 rRNA molecules (25S, 5.8S and 5S rRNA) and 46 different proteins (encoded by 81 genes). uS11 interacts with eS1 forming part of the mRNA exit tunnel. uS11 interacts with snoRNA U3. uS11 interacts with MPP10. Component of the ribosomal small subunit (SSU) processome composed of at least 40 protein subunits and snoRNA U3.

The protein resides in the cytoplasm. The protein localises to the nucleus. It is found in the nucleolus. Its function is as follows. Component of the ribosome, a large ribonucleoprotein complex responsible for the synthesis of proteins in the cell. The small ribosomal subunit (SSU) binds messenger RNAs (mRNAs) and translates the encoded message by selecting cognate aminoacyl-transfer RNA (tRNA) molecules. The large subunit (LSU) contains the ribosomal catalytic site termed the peptidyl transferase center (PTC), which catalyzes the formation of peptide bonds, thereby polymerizing the amino acids delivered by tRNAs into a polypeptide chain. The nascent polypeptides leave the ribosome through a tunnel in the LSU and interact with protein factors that function in enzymatic processing, targeting, and the membrane insertion of nascent chains at the exit of the ribosomal tunnel. uS11 is involved in nucleolar processing of pre-18S ribosomal RNA and ribosome assembly. The chain is Small ribosomal subunit protein uS11B from Saccharomyces cerevisiae (strain ATCC 204508 / S288c) (Baker's yeast).